We begin with the raw amino-acid sequence, 757 residues long: Catalase-peroxidase (757 aa).

Residues 101-248 constitute a cross-link (tryptophyl-tyrosyl-methioninium (Trp-Tyr) (with M-274)); it reads WHSAGTYRIG…LAAVQMGLIY (148 aa). His-102 acts as the Proton acceptor in catalysis. Residues 213-232 form a disordered region; it reads VHHPDEHRGAKEKASKNSDS. The segment at residues 248–274 is a cross-link (tryptophyl-tyrosyl-methioninium (Tyr-Met) (with W-101)); that stretch reads YVNPEGPDGCPDPLASARDIRETFARM. A heme b-binding site is contributed by His-289.

Belongs to the peroxidase family. Peroxidase/catalase subfamily. In terms of assembly, homodimer or homotetramer. The cofactor is heme b. Formation of the three residue Trp-Tyr-Met cross-link is important for the catalase, but not the peroxidase activity of the enzyme.

The enzyme catalyses H2O2 + AH2 = A + 2 H2O. The catalysed reaction is 2 H2O2 = O2 + 2 H2O. In terms of biological role, bifunctional enzyme with both catalase and broad-spectrum peroxidase activity. The chain is Catalase-peroxidase from Xylella fastidiosa (strain M23).